A 194-amino-acid polypeptide reads, in one-letter code: Probable molybdenum cofactor guanylyltransferase (194 aa).

GTP contacts are provided by residues 8–10 (LAG), lysine 20, and aspartate 99. Aspartate 99 contacts Mg(2+).

This sequence belongs to the MobA family. Requires Mg(2+) as cofactor.

The protein resides in the cytoplasm. The enzyme catalyses Mo-molybdopterin + GTP + H(+) = Mo-molybdopterin guanine dinucleotide + diphosphate. Its function is as follows. Transfers a GMP moiety from GTP to Mo-molybdopterin (Mo-MPT) cofactor (Moco or molybdenum cofactor) to form Mo-molybdopterin guanine dinucleotide (Mo-MGD) cofactor. This Synechococcus elongatus (strain ATCC 33912 / PCC 7942 / FACHB-805) (Anacystis nidulans R2) protein is Probable molybdenum cofactor guanylyltransferase.